Reading from the N-terminus, the 70-residue chain is Large ribosomal subunit protein uL29 (70 aa).

Belongs to the universal ribosomal protein uL29 family.

This Gloeobacter violaceus (strain ATCC 29082 / PCC 7421) protein is Large ribosomal subunit protein uL29.